The following is a 345-amino-acid chain: D-alanine--D-alanine ligase (345 aa).

The region spanning 137–342 (KAAFSAAGLP…LEELVHQLLE (206 aa)) is the ATP-grasp domain. An ATP-binding site is contributed by 169–224 (ETQLGYPCFIKPANLGSSVGISKATNRSELQAGLDLAASHDSRLLVEKGLQVRELE). 3 residues coordinate Mg(2+): D295, E309, and N311.

Belongs to the D-alanine--D-alanine ligase family. Requires Mg(2+) as cofactor. Mn(2+) is required as a cofactor.

The protein localises to the cytoplasm. It catalyses the reaction 2 D-alanine + ATP = D-alanyl-D-alanine + ADP + phosphate + H(+). The protein operates within cell wall biogenesis; peptidoglycan biosynthesis. Cell wall formation. This chain is D-alanine--D-alanine ligase, found in Synechococcus sp. (strain RCC307).